Reading from the N-terminus, the 295-residue chain is Zinc finger transcription factor pqm-1 (295 aa).

Residues 1 to 23 (MSFLNNDFGSPPATSSPPTTMPK) form a disordered region. Residues 10 to 22 (SPPATSSPPTTMP) show a composition bias toward low complexity. A C2H2-type 1; degenerate zinc finger spans residues 161–183 (YMCTVCRKVYGRYNSVSYHVTIY). The segment at 227 to 249 (RKCPHCRHVSKSPAMLEKHIRRH) adopts a C2H2-type 2 zinc-finger fold.

Belongs to the krueppel C2H2-type zinc-finger protein family. In terms of assembly, interacts with ceh-60.

It localises to the chromosome. Its subcellular location is the nucleus. The protein resides in the cytoplasm. Its function is as follows. Zinc finger transcription factor which acts as both a transcriptional activator and repressor. Binds to the promoters of genes that contain the 5'-CTTATCA-3' DNA consensus sequence in their regulatory region. Functions downstream of the Insulin/IGF-1-like signaling (IIS) mediated pathway. Involved in normal development, lifespan, stress response, lipid metabolism, innate immunity and exit from the developmentally arrested larval state known as dauer. Required for stress-induced expression of hsp-90 and resistance to heat stress, perhaps as part of a systemic stress signaling pathway. Involved in maintenance of proteostasis. Under hypoxic stress increases lipid levels by positively regulating fatty acid synthesis via fat-7 expression. Associates with homeobox protein ceh-60 at the promoters of some stress-responsive genes to regulate expression; may require phosphorylation for transcriptional repression activity. Acts downstream of nhr-14 to activate transcription of intestinal metal transporter smf-3, modulating innate immunity and iron uptake. May act downstream of the mTORC2 signaling mediated pathway. May act in a mutually exclusive manner with the FOXO transcription factor daf-16. The chain is Zinc finger transcription factor pqm-1 from Caenorhabditis elegans.